The chain runs to 229 residues: Transcriptional regulatory protein YxdJ (229 aa).

Residues 3 to 116 form the Response regulatory domain; the sequence is KIMIVEDSED…IVLAKIKSQI (114 aa). Aspartate 52 carries the 4-aspartylphosphate modification. A DNA-binding region (ompR/PhoB-type) is located at residues 129 to 227; sequence EKVVEYAGVQ…VRGEGYQLRA (99 aa).

In terms of processing, phosphorylated by YxdK.

It is found in the cytoplasm. Probable member of the two-component regulatory system YxdK/YxdJ. Positively regulates the expression of the yxdLMyxeA operon by direct interaction with its promoter region. Could also indirectly regulate the expression of the dlt operon. The protein is Transcriptional regulatory protein YxdJ (yxdJ) of Bacillus subtilis (strain 168).